The chain runs to 358 residues: Phosphoribosyl pyrophosphate synthase-associated protein 2 (358 aa).

Belongs to the ribose-phosphate pyrophosphokinase family.

Seems to play a negative regulatory role in 5-phosphoribose 1-diphosphate synthesis. This Xenopus tropicalis (Western clawed frog) protein is Phosphoribosyl pyrophosphate synthase-associated protein 2 (prpsap2).